Here is a 439-residue protein sequence, read N- to C-terminus: Putative FBD-associated F-box protein At1g05080 (439 aa).

The region spanning 12-58 (EDRISVLPEDLLVVILDLLPTKDVVATMILSKRWLSIWTMVRTLEYT) is the F-box domain. Residues 360-410 (SWKQPSHVPECLSSQLEIFEWRDYGDRIIEEEFLTYVLANSKRLKTATISL) enclose the FBD domain.

The chain is Putative FBD-associated F-box protein At1g05080 from Arabidopsis thaliana (Mouse-ear cress).